The following is a 140-amino-acid chain: Desampylase (140 aa).

Residues threonine 13–serine 133 enclose the MPN domain. The active-site Proton donor/acceptor is the glutamate 34. Residues histidine 88, histidine 90, and aspartate 101 each coordinate Zn(2+). Positions histidine 88–aspartate 101 match the JAMM motif motif.

Belongs to the peptidase M67B family. Exists in two major states: monomer and homodimer. Both conformational states are catalytically active. Requires Zn(2+) as cofactor. Post-translationally, the disulfide bridge probably stabilizes the PfJAMM1 homodimer at the optimal growth temperature of the hyperthermophile.

It carries out the reaction an N(6)-[small archaeal modifier protein]-[protein]-L-lysine + H2O = a [protein]-L-lysine + a [small archaeal modifier protein].. With respect to regulation, inhibited by EDTA in vitro. Metalloprotease that displays desampylase (DSAMP) activity, cleaving ubiquitin-like small archaeal modifier proteins (SAMP1, SAMP2 and SAMP3) from protein conjugates (isopeptide- and linear-linked). Thus, likely regulates sampylation and the pools of 'free' SAMP available for protein modification. In vitro, is also able to cleave non-physiological ubiquitin (Ub) substrates, such as 'Met1-', 'Lys48-', and 'Lys63'-linked Ub dimers (Ub2), and to remove Ub tags from diverse proteins. The chain is Desampylase from Pyrococcus furiosus (strain ATCC 43587 / DSM 3638 / JCM 8422 / Vc1).